A 355-amino-acid polypeptide reads, in one-letter code: Vacuolar protein sorting-associated protein 37C (355 aa).

Serine 29 bears the Phosphoserine mark. A VPS37 C-terminal domain is found at valine 78–alanine 167. The disordered stretch occupies residues lysine 159–tyrosine 355. Pro residues-rich tracts occupy residues alanine 170 to threonine 186 and proline 194 to leucine 205. A compositionally biased stretch (low complexity) spans proline 246–glycine 257. The span at proline 321–tyrosine 355 shows a compositional bias: pro residues.

Belongs to the VPS37 family. Component of the ESCRT-I complex (endosomal sorting complex required for transport I) which consists of TSG101, VPS28, a VPS37 protein (VPS37A to -D) and MVB12A or MVB12B in a 1:1:1:1 stoichiometry. Interacts with TSG101, VPS28, MVB12A and MVB12B. Component of the ESCRT-I complex (endosomal sorting complex required for transport I) which consists of TSG101, VPS28, a VPS37 protein (VPS37A to -D) and UBAP1 in a 1:1:1:1 stoichiometry. Interacts with HGS and STAM2. Interacts with CEP55. Post-translationally, phosphorylated by TBK1.

It localises to the late endosome membrane. Its function is as follows. Component of the ESCRT-I complex, a regulator of vesicular trafficking process. Required for the sorting of endocytic ubiquitinated cargos into multivesicular bodies. May be involved in cell growth and differentiation. This is Vacuolar protein sorting-associated protein 37C (VPS37C) from Pongo abelii (Sumatran orangutan).